Consider the following 260-residue polypeptide: Carbonic anhydrase 2 (260 aa).

An N-acetylserine modification is found at S2. Position 2 is a phosphoserine (S2). Residues 3–259 (HHWGYGKHNG…LKNRQIKASF (257 aa)) enclose the Alpha-carbonic anhydrase domain. H64 (proton donor/acceptor) is an active-site residue. The Zn(2+) site is built by H94, H96, and H119. 2 positions are modified to phosphoserine: S165 and S172. Substrate is bound at residue 198 to 199 (TT).

This sequence belongs to the alpha-carbonic anhydrase family. As to quaternary structure, interacts with SLC4A4. Interaction with SLC4A7 regulates SLC4A7 transporter activity. Interacts with SLC26A6 isoform 4 (via C-terminus cytoplasmic domain). Zn(2+) serves as cofactor. Co(2+) is required as a cofactor.

Its subcellular location is the cytoplasm. The protein localises to the cell membrane. The enzyme catalyses hydrogencarbonate + H(+) = CO2 + H2O. It catalyses the reaction urea = cyanamide + H2O. With respect to regulation, activated by X-ray, histamine, L-adrenaline, L- and D-phenylalanine, L- and D-histidine, L-His-OMe and beta-Ala-His (carnosine). Competitively inhibited by saccharin, thioxolone, coumarins, 667-coumate, celecoxib (Celebrex), valdecoxib (Bextra), SC-125, SC-560, diclofenac, acetate, azide, bromide, sulfonamide derivatives such as acetazolamide (AZA), methazolamide (MZA), ethoxzolamide (EZA), dichlorophenamide (DCP), brinzolamide, dansylamide, thiabendazole-5-sulfonamide, trifluoromethane sulfonamide and N-hydroxysulfamide, fructose-based sugar sulfamate RWJ-37497, and Foscarnet (phosphonoformate trisodium salt). Repressed strongly by hydrogen sulfide(HS) and weakly by nitrate (NO(3)). Esterase activity weakly reduced by cyanamide. N-hydroxyurea interferes with zinc binding and inhibit activity. In terms of biological role, catalyzes the reversible hydration of carbon dioxide. Can also hydrate cyanamide to urea. Stimulates the chloride-bicarbonate exchange activity of SLC26A6. Essential for bone resorption and osteoclast differentiation. Involved in the regulation of fluid secretion into the anterior chamber of the eye. Contributes to intracellular pH regulation in the duodenal upper villous epithelium during proton-coupled peptide absorption. In Homo sapiens (Human), this protein is Carbonic anhydrase 2 (CA2).